Here is a 561-residue protein sequence, read N- to C-terminus: uncharacterized protein (561 aa).

The next 2 helical transmembrane spans lie at 29-49 (FIFN…KKII) and 80-100 (FLFH…ASII).

The protein resides in the cell membrane. This is an uncharacterized protein from Mycoplasma genitalium (strain ATCC 33530 / DSM 19775 / NCTC 10195 / G37) (Mycoplasmoides genitalium).